Consider the following 248-residue polypeptide: Coproheme decarboxylase (248 aa).

Residues Arg-130, Tyr-144, 144–148 (YPMDK), Lys-148, His-171, Gln-184, and Ser-222 contribute to the Fe-coproporphyrin III site. Tyr-144 is a catalytic residue.

It belongs to the ChdC family. Type 1 subfamily. As to quaternary structure, homopentamer. The cofactor is Fe-coproporphyrin III.

The enzyme catalyses Fe-coproporphyrin III + 2 H2O2 + 2 H(+) = heme b + 2 CO2 + 4 H2O. The catalysed reaction is Fe-coproporphyrin III + H2O2 + H(+) = harderoheme III + CO2 + 2 H2O. It carries out the reaction harderoheme III + H2O2 + H(+) = heme b + CO2 + 2 H2O. Its pathway is porphyrin-containing compound metabolism; protoheme biosynthesis. Its function is as follows. Involved in coproporphyrin-dependent heme b biosynthesis. Catalyzes the decarboxylation of Fe-coproporphyrin III (coproheme) to heme b (protoheme IX), the last step of the pathway. The reaction occurs in a stepwise manner with a three-propionate harderoheme intermediate. The sequence is that of Coproheme decarboxylase from Geobacillus stearothermophilus (strain DSM 13240 / CIP 106956 / 10).